A 511-amino-acid polypeptide reads, in one-letter code: Maturase K (511 aa).

Belongs to the intron maturase 2 family. MatK subfamily.

Its subcellular location is the plastid. It localises to the chloroplast. Usually encoded in the trnK tRNA gene intron. Probably assists in splicing its own and other chloroplast group II introns. This chain is Maturase K, found in Bromus inermis (Smooth brome grass).